The following is a 127-amino-acid chain: Small ribosomal subunit protein uS12 (127 aa).

At Asp-89 the chain carries 3-methylthioaspartic acid.

This sequence belongs to the universal ribosomal protein uS12 family. Part of the 30S ribosomal subunit. Contacts proteins S8 and S17. May interact with IF1 in the 30S initiation complex.

Its function is as follows. With S4 and S5 plays an important role in translational accuracy. In terms of biological role, interacts with and stabilizes bases of the 16S rRNA that are involved in tRNA selection in the A site and with the mRNA backbone. Located at the interface of the 30S and 50S subunits, it traverses the body of the 30S subunit contacting proteins on the other side and probably holding the rRNA structure together. The combined cluster of proteins S8, S12 and S17 appears to hold together the shoulder and platform of the 30S subunit. The chain is Small ribosomal subunit protein uS12 from Campylobacter lari (strain RM2100 / D67 / ATCC BAA-1060).